Reading from the N-terminus, the 207-residue chain is 8-oxoguanine DNA glycosylase/AP lyase (207 aa).

Residues K128 and D146 contribute to the active site.

Belongs to the type-2 OGG1 family.

The enzyme catalyses 2'-deoxyribonucleotide-(2'-deoxyribose 5'-phosphate)-2'-deoxyribonucleotide-DNA = a 3'-end 2'-deoxyribonucleotide-(2,3-dehydro-2,3-deoxyribose 5'-phosphate)-DNA + a 5'-end 5'-phospho-2'-deoxyribonucleoside-DNA + H(+). In terms of biological role, catalyzes the excision of an oxidatively damaged form of guanine (7,8-dihydro-8-oxoguanine = 8-oxoG) from DNA. Also cleaves the DNA backbone at apurinic/apyrimidinic sites (AP sites). The protein is 8-oxoguanine DNA glycosylase/AP lyase of Saccharolobus islandicus (strain Y.N.15.51 / Yellowstone #2) (Sulfolobus islandicus).